Consider the following 423-residue polypeptide: Glucose-1-phosphate adenylyltransferase (423 aa).

Alpha-D-glucose 1-phosphate contacts are provided by residues tyrosine 98, glycine 163, 178-179, and serine 189; that span reads EK.

Belongs to the bacterial/plant glucose-1-phosphate adenylyltransferase family. Homotetramer.

The catalysed reaction is alpha-D-glucose 1-phosphate + ATP + H(+) = ADP-alpha-D-glucose + diphosphate. It participates in glycan biosynthesis; glycogen biosynthesis. Functionally, involved in the biosynthesis of ADP-glucose, a building block required for the elongation reactions to produce glycogen. Catalyzes the reaction between ATP and alpha-D-glucose 1-phosphate (G1P) to produce pyrophosphate and ADP-Glc. The chain is Glucose-1-phosphate adenylyltransferase from Thermotoga sp. (strain RQ2).